The following is a 573-amino-acid chain: Urease subunit alpha 2 (573 aa).

Residues 135–573 (GGMDTHVHYI…ISLNQLYFFS (439 aa)) form the Urease domain. His-140, His-142, and Lys-223 together coordinate Ni(2+). Position 223 is an N6-carboxylysine (Lys-223). His-225 serves as a coordination point for substrate. Ni(2+) is bound by residues His-252 and His-278. His-326 serves as the catalytic Proton donor. Asp-366 contributes to the Ni(2+) binding site.

The protein belongs to the metallo-dependent hydrolases superfamily. Urease alpha subunit family. As to quaternary structure, heterotrimer of UreA (gamma), UreB (beta) and UreC (alpha) subunits. Three heterotrimers associate to form the active enzyme. Requires Ni cation as cofactor. Post-translationally, carboxylation allows a single lysine to coordinate two nickel ions.

It is found in the cytoplasm. It carries out the reaction urea + 2 H2O + H(+) = hydrogencarbonate + 2 NH4(+). Its pathway is nitrogen metabolism; urea degradation; CO(2) and NH(3) from urea (urease route): step 1/1. Disrupting the ure2 operon has no effect on urease activity, or pathogen survival in BALB/c mice when inoculated by gavage, but confers slightly enhanced resistance to low pH killing in vitro. The protein is Urease subunit alpha 2 of Brucella suis biovar 1 (strain 1330).